The sequence spans 289 residues: Dermonecrotic toxin LarSicTox-betaID1 (289 aa).

A signal peptide spans 1 to 2 (EG). A propeptide spanning residues 3 to 11 (AEQDGSERT) is cleaved from the precursor. His-22 is a catalytic residue. Mg(2+)-binding residues include Glu-42 and Asp-44. Residue His-58 is the Nucleophile of the active site. Disulfide bonds link Cys-62–Cys-68 and Cys-64–Cys-207. Asp-102 contacts Mg(2+).

Belongs to the arthropod phospholipase D family. Class II subfamily. The cofactor is Mg(2+). In terms of tissue distribution, expressed by the venom gland.

Its subcellular location is the secreted. It catalyses the reaction an N-(acyl)-sphingosylphosphocholine = an N-(acyl)-sphingosyl-1,3-cyclic phosphate + choline. The catalysed reaction is N-hexanoyl-sphing-4-enine-1-phosphocholine = N-(hexanoyl)-sphing-4-enine-1,3-cyclic phosphate + choline. The enzyme catalyses N-(dodecanoyl)-sphing-4-enine-1-phosphocholine = N-dodecanoyl-sphing-4-enine-1,3-cyclic phosphate + choline. It carries out the reaction an N-(acyl)-sphingosylphosphoethanolamine = an N-(acyl)-sphingosyl-1,3-cyclic phosphate + ethanolamine. It catalyses the reaction N-dodecanoyl-heptadecasphing-4-enine-1-phosphoethanolamine = N-dodecanoyl-heptadecasphing-4-enine-1,3-cyclic phosphate + ethanolamine. The catalysed reaction is a 1-acyl-sn-glycero-3-phosphocholine = a 1-acyl-sn-glycero-2,3-cyclic phosphate + choline. The enzyme catalyses 1-tetradecanoyl-sn-glycero-3-phosphocholine = 1-tetradecanoyl-sn-glycero-2,3-cyclic phosphate + choline. It carries out the reaction 1-octanoyl-sn-glycero-3-phosphocholine = 1-octanoyl-sn-glycero-2,3-cyclic phosphate + choline. It catalyses the reaction a 1-acyl-sn-glycero-3-phosphoethanolamine = a 1-acyl-sn-glycero-2,3-cyclic phosphate + ethanolamine. The catalysed reaction is 1-tetradecanoyl-sn-glycero-3-phosphoethanolamine = 1-tetradecanoyl-sn-glycero-2,3-cyclic phosphate + ethanolamine. In terms of biological role, dermonecrotic toxins cleave the phosphodiester linkage between the phosphate and headgroup of certain phospholipids (sphingolipid and lysolipid substrates), forming an alcohol (often choline) and a cyclic phosphate. This toxin acts on sphingomyelin (SM) and on ceramide phosphoethanolamine (CPE) with high activity. It also acts on lysophosphatidylcholine (LPC) and on lysophosphatidylethanolamine (LPE) with moderate activity. It is not active on lysophosphatidylserine (LPS), and lysophosphatidylglycerol (LPG). It acts by transphosphatidylation, releasing exclusively cyclic phosphate as second products. It is not surprising that spider toxins have affinity for ethanolamine-containing sphingolipids since they are common in insect prey. On mammals, induces dermonecrosis, hemolysis, increased vascular permeability, edema, inflammatory response, and platelet aggregation. This is Dermonecrotic toxin LarSicTox-betaID1 from Loxosceles arizonica (Arizona brown spider).